A 645-amino-acid polypeptide reads, in one-letter code: DEAD-box ATP-dependent RNA helicase 46 (645 aa).

2 disordered regions span residues 1 to 22 and 44 to 137; these read MAAT…KPWK and YERP…AGNE. Positions 15 to 49 constitute a WW domain; it reads PNLPKPWKGLVDSRTGYLYFWNPETNVTQYERPAS. Residues 60 to 72 are compositionally biased toward low complexity; the sequence is VSSSVQTNQQSSS. Residues 77-91 are compositionally biased toward basic and acidic residues; the sequence is GKEDDKYGRGSDGPK. The segment covering 108 to 136 has biased composition (low complexity); the sequence is SSNDAASGLGNASSGGSSARGPPSSAAGN. The Q motif motif lies at 161–189; sequence MSFEATGLPNELLREVYSAGFSAPSPIQA. Residues 192–366 form the Helicase ATP-binding domain; sequence WPIAMQNRDI…ADLLVNPAQV (175 aa). 205–212 lines the ATP pocket; sequence AKTGSGKT. A DEAD box motif is present at residues 314-317; that stretch reads DEAD. One can recognise a Helicase C-terminal domain in the interval 395–539; sequence RLEQILRSQE…KVPPQVREMA (145 aa). The disordered stretch occupies residues 532–645; the sequence is PPQVREMATR…FHEAMMMKNR (114 aa). The span at 556–597 shows a compositional bias: gly residues; the sequence is SSGGGGGRGGYGDSGYGGRGESGYGSRGDSGYGGRGDSGGRG. Low complexity predominate over residues 598–608; that stretch reads SWAPSRDSSGS. The span at 612 to 623 shows a compositional bias: basic and acidic residues; it reads GRERSRSPERFR. The span at 624 to 634 shows a compositional bias: low complexity; the sequence is GGPPSTSSPPR.

The protein belongs to the DEAD box helicase family. DDX5/DBP2 subfamily.

It catalyses the reaction ATP + H2O = ADP + phosphate + H(+). The sequence is that of DEAD-box ATP-dependent RNA helicase 46 (RH46) from Arabidopsis thaliana (Mouse-ear cress).